Reading from the N-terminus, the 916-residue chain is Protein prickle (916 aa).

2 disordered regions span residues 49-105 (PLSP…AGGS) and 127-176 (QHLQ…IPVD). The segment covering 145 to 156 (SSPSPALSSSIT) has biased composition (low complexity). Gly residues predominate over residues 157–171 (TGGGGVTRGGGGGGH). The 109-residue stretch at 167 to 275 (GGGGHIIPVD…TVKQLATNQI (109 aa)) folds into the PET domain. LIM zinc-binding domains follow at residues 274–338 (QICD…ETLK), 339–399 (PRCS…MFAE), and 400–462 (YCDF…GEPP). Disordered regions lie at residues 460–593 (EPPT…PNHR), 635–671 (VIPGPSIAKTNPALTSSMPELSQSLQQQQQQQQQPQS), 692–725 (DAIQNASDDASHSIVELPTPPPIVSNTRDPENLP), and 763–870 (RSKS…DTVY). 3 stretches are compositionally biased toward polar residues: residues 507 to 517 (SPISERSTPHS), 526 to 569 (EMST…SRTL), and 642 to 654 (AKTNPALTSSMPE). A compositionally biased stretch (low complexity) spans 655-671 (LSQSLQQQQQQQQQPQS). The segment covering 777 to 793 (RSSKSKRRSSHHHQHHR) has biased composition (basic residues). Positions 796–805 (GESSSYSGTS) are enriched in low complexity. Residues 829 to 844 (VPDVEFIEHQDHHRGD) show a composition bias toward basic and acidic residues. Residues 852–867 (RSVCSTCSSSSSSADD) show a composition bias toward low complexity.

The protein belongs to the prickle / espinas / testin family. In terms of assembly, interacts with dsh; PET and LIM domains interact with dsh DEP domain, in wing cells. Interacts with Vang in photoreceptor cells.

It is found in the cell membrane. In terms of biological role, acts in a planar cell polarity (PCP) complex; polarization along the apical/basal axis of epithelial cells. PCP signaling in the wing disk requires the receptor fz and the cytoplasmic proteins dsh and pk. These act in a feedback loop leading to activation of the jnk cascade and subsequent polarized arrangement of hairs and bristles. Dgo and pk compete with one another for dsh binding, thereby modulating fz dsh activity and ensuring tight control over fz PCP signaling. Vang, stan and pk function together to regulate the establishment of tissue polarity in the adult eye. The sequence is that of Protein prickle from Aedes aegypti (Yellowfever mosquito).